The sequence spans 104 residues: Large ribosomal subunit protein uL23 (104 aa).

This sequence belongs to the universal ribosomal protein uL23 family. Part of the 50S ribosomal subunit. Contacts protein L29, and trigger factor when it is bound to the ribosome.

Its function is as follows. One of the early assembly proteins it binds 23S rRNA. One of the proteins that surrounds the polypeptide exit tunnel on the outside of the ribosome. Forms the main docking site for trigger factor binding to the ribosome. This is Large ribosomal subunit protein uL23 from Leptospira borgpetersenii serovar Hardjo-bovis (strain JB197).